The sequence spans 434 residues: Neuropeptide receptor 22 (434 aa).

Residues 1-55 (MDEGGGIGSSLLSRITTTASEIMMRNEPTTTENPAVQEMNHIYHLTPSMKMLCIL) lie on the Extracellular side of the membrane. Residues 56-76 (FYSILCVCCVYGNVLVILVIV) traverse the membrane as a helical segment. Topologically, residues 77-86 (YFKRLRTATN) are cytoplasmic. Residues 87–107 (ILILNLAVADLLISVFCIPFS) traverse the membrane as a helical segment. Residues 108–128 (YWQVLIYDDQRWLFGSMMCSL) are Extracellular-facing. Cys-126 and Cys-204 are joined by a disulfide. A helical membrane pass occupies residues 129–149 (LAFLQAMAVFLSAWTLVVISF). At 150–169 (DRWMAIMFLLTPNIRITRRR) the chain is on the cytoplasmic side. Residues 170 to 190 (ALYLVAATWIFSILMALPLLF) traverse the membrane as a helical segment. Over 191-226 (TTRFFEDQDGLPNCGENWTYFGDSGEQVRKVYSSMV) the chain is Extracellular. N-linked (GlcNAc...) asparagine glycosylation is present at Asn-207. Residues 227–247 (LILQYVVPQAVLIITYTHIGI) form a helical membrane-spanning segment. Topologically, residues 248–277 (KMWNSRVPGMQNGATKKMIVDRHESVKKLV) are cytoplasmic. Residues 278–298 (PMVILISALFALCWLPLLILI) traverse the membrane as a helical segment. Over 299–310 (NVIPEFYPDINS) the chain is Extracellular. The helical transmembrane segment at 311-331 (WGYILYLWWFAHGLAMSHSMV) threads the bilayer. Residues 332 to 434 (NPIIYFIRNA…VRNNSANSLA (103 aa)) are Cytoplasmic-facing.

It belongs to the G-protein coupled receptor 1 family. Expressed in many cells, mainly in the head region, with expression detected in the head muscles, I2 neurons, MC neurons, RIH neuron, AIA neurons, AUA neurons, ASK neurons, ASI neurons, a few B-type motorneurons in the posterior ventral nerve cord, pharyngeal muscles, body wall muscles, the intestine and a few classes of unidentified cells anterior to the nerve ring. Expression in the MC neurons is important to mediate suppression of feeding while expression in the RIH neuron is important for the facilitation of egg-laying. No expression detected in other tissues including hypodermis.

The protein resides in the cell membrane. Its function is as follows. Receptor for the LURY-1-1 and LURY-1-2 peptides which control food-related processes including feeding, lifespan, egg-laying and roaming behavior. Receptor for flp-7 which stimulates serotonin-induced fat loss. Serotonin induces secretion of flp-7 from neurons and binding to npr-22 which leads to induction of the atgp-1 lipase and subsequent fat loss. Acts in vitro as a receptor for the flp-7 FMRFamide-like neuropeptides TPMQRSSMVRF-amide, SPMQRSSMVRF-amide, SPMERSAMVRF-amide and SPMDRSKMVRF-amide. Also acts in vitro as a receptor for a number of other FMRFamide-like neuropeptides including the flp-1 neuropeptide PNFMRY-amide, the flp-9 neuropeptide KPSFVRF-amide, the flp-11 neuropeptides AMRNALVRF-amide, ASGGMRNALVRF-amide and NGAPQPFVRF-amide, the flp-13 neuropeptides AADGAPLIRF-amide, ASPSAPLIRF-amide, SPSAVPLIRF-amide, SAAAPLIRF-amide and ASSAPLIRF-amide, and the flp-22 neuropeptide SPSAKWMRF-amide. The SPMERSAMVRF-amide neuropeptide from flp-7 acts as the strongest in vitro activator of npr-22. The sequence is that of Neuropeptide receptor 22 from Caenorhabditis elegans.